Here is a 510-residue protein sequence, read N- to C-terminus: MTKRALISVSDKTGVVEFAAQLQQRGWELLSTGGTFATLSGAGIPVRQVSDVTGFPEMLDGRVKTLHPAIHGGILARREAGHLGQLAAQDIGTIDLVCVNLYPFRETVARGAPDPEVIENIDIGGPAMIRSAAKNHDAVLVLVDPADYALALQDEVSPAERRRLAAKAYRHTSEYDAAITAYLSGESDELPTQLPEHLSLDLTRTAQVRYGENPHQPGAIYRWGNARGPVIDAQVVAGKPMSFNNYADADAAWSLCQELAAQEQGAVCVAVKHANPCGVAVAADVKTAWERARDADTLSVFGGVVAVSQPVDFGAAQSMKGTFLEVLIAPDVTPDAVEWFAAKKPDLRVLIAGQPQGVSVLDVRPLTGGFAVQERDARPWDDLCPEVVTERQPSEQEWADLRFAWAVVKGARSNAVALCKGGVTVGLGAGAVSRIWAAERAIANAGEAAQGAVLASEAFFPFDDVVRLAASAGVTAVLQPGGAKRDPEVIAACNELGISMVFTGSRHFRH.

The MGS-like domain maps to 1–143 (MTKRALISVS…KNHDAVLVLV (143 aa)).

This sequence belongs to the PurH family.

It carries out the reaction (6R)-10-formyltetrahydrofolate + 5-amino-1-(5-phospho-beta-D-ribosyl)imidazole-4-carboxamide = 5-formamido-1-(5-phospho-D-ribosyl)imidazole-4-carboxamide + (6S)-5,6,7,8-tetrahydrofolate. The enzyme catalyses IMP + H2O = 5-formamido-1-(5-phospho-D-ribosyl)imidazole-4-carboxamide. The protein operates within purine metabolism; IMP biosynthesis via de novo pathway; 5-formamido-1-(5-phospho-D-ribosyl)imidazole-4-carboxamide from 5-amino-1-(5-phospho-D-ribosyl)imidazole-4-carboxamide (10-formyl THF route): step 1/1. It participates in purine metabolism; IMP biosynthesis via de novo pathway; IMP from 5-formamido-1-(5-phospho-D-ribosyl)imidazole-4-carboxamide: step 1/1. The chain is Bifunctional purine biosynthesis protein PurH from Deinococcus radiodurans (strain ATCC 13939 / DSM 20539 / JCM 16871 / CCUG 27074 / LMG 4051 / NBRC 15346 / NCIMB 9279 / VKM B-1422 / R1).